The following is a 674-amino-acid chain: Pannexin-2 (674 aa).

The Cytoplasmic segment spans residues 11–53; the sequence is MATALLAGEKLRELILPGSQDDKAGALAALLLQLKLELPFDRV. The chain crosses the membrane as a helical span at residues 54–74; that stretch reads VTIGTVLVPILLVTLVFTKNF. Over 75 to 125 the chain is Extracellular; that stretch reads AEEPIYCYTPHNFTRDQALYARGYCWTELRDALPGVDASLWPSLFEHKFLP. N-linked (GlcNAc...) asparagine glycosylation occurs at asparagine 86. A helical membrane pass occupies residues 126–146; the sequence is YALLAFAAIMYVPALGWEFLA. At 147–230 the chain is on the cytoplasmic side; it reads STRLTSELNF…NFLAKLYLAR (84 aa). Residues 231 to 251 traverse the membrane as a helical segment; the sequence is HVLILLLSVVPISYLCTYYAT. Over 252–295 the chain is Extracellular; that stretch reads QKQNEFTCALGASPDGPVGSAGPTVRVSCKLPSVQLQRIIAGVD. The chain crosses the membrane as a helical span at residues 296 to 316; it reads IVLLCFMNLIILVNLIHLFIF. The Cytoplasmic portion of the chain corresponds to 317–674; that stretch reads RKSNFIFDKL…PRTVVSTVEF (358 aa). The span at 394 to 408 shows a compositional bias: polar residues; the sequence is TTPTVRDSGIQTVDP. Disordered regions lie at residues 394-426 and 485-510; these read TTPT…VVKR and AHHY…KKHT. Serine 590 and serine 601 each carry phosphoserine.

It belongs to the pannexin family. Forms PANX1/PANX2-heteromeric intercellular channels on coexpression in paired Xenopus oocytes. Does not form homomeric channels. In terms of processing, S-palmitoylated in neural stem and progenitor cells. Post-translationally, cleaved by CASP3 and CASP7 during apoptosis. Cleavage has no effect on it function. As to expression, expressed in the eye, thyroid, prostate, kidney and liver. Abundantly expressed in the CNS, including hippocampus, olfactory bulb, cortex, cerebellum. Not detected in the white matter.

The protein localises to the cell membrane. It localises to the golgi apparatus membrane. Its subcellular location is the endoplasmic reticulum membrane. Its function is as follows. Structural component of the gap junctions and the hemichannels. The protein is Pannexin-2 (Panx2) of Rattus norvegicus (Rat).